Consider the following 82-residue polypeptide: UPF0291 protein LJ_1507 (82 aa).

Residues 61-82 (DGKEVTSEKAKEAQRRKGLRKD) are disordered.

It belongs to the UPF0291 family.

It localises to the cytoplasm. This is UPF0291 protein LJ_1507 from Lactobacillus johnsonii (strain CNCM I-12250 / La1 / NCC 533).